A 614-amino-acid polypeptide reads, in one-letter code: DNA mismatch repair protein MutL (614 aa).

It belongs to the DNA mismatch repair MutL/HexB family.

This protein is involved in the repair of mismatches in DNA. It is required for dam-dependent methyl-directed DNA mismatch repair. May act as a 'molecular matchmaker', a protein that promotes the formation of a stable complex between two or more DNA-binding proteins in an ATP-dependent manner without itself being part of a final effector complex. The chain is DNA mismatch repair protein MutL from Thermoanaerobacter pseudethanolicus (strain ATCC 33223 / 39E) (Clostridium thermohydrosulfuricum).